The sequence spans 164 residues: Dehydrin Rab16C (164 aa).

Gly residues predominate over residues 42–51; sequence MGGHHAGAGG. A disordered region spans residues 42 to 164; it reads MGGHHAGAGG…KIKEKLPGQH (123 aa). The span at 105–115 shows a compositional bias: low complexity; that stretch reads GNNQQQQQMMG. Over residues 128–138 the composition is skewed to gly residues; that stretch reads GMTGAGTGTGV. Residues 147–164 show a composition bias toward basic and acidic residues; it reads GEKKGFMDKIKEKLPGQH.

This sequence belongs to the plant dehydrin family.

The polypeptide is Dehydrin Rab16C (RAB16C) (Oryza sativa subsp. japonica (Rice)).